We begin with the raw amino-acid sequence, 78 residues long: Translation initiation factor IF-1, chloroplastic (78 aa).

An S1-like domain is found at 1-73 (MASNRELIEM…TKGRIIYRLR (73 aa)).

This sequence belongs to the IF-1 family. As to quaternary structure, component of the 30S ribosomal translation pre-initiation complex which assembles on the 30S ribosome in the order IF-2 and IF-3, IF-1 and N-formylmethionyl-tRNA(fMet); mRNA recruitment can occur at any time during PIC assembly.

The protein localises to the plastid. Its subcellular location is the chloroplast. Functionally, one of the essential components for the initiation of protein synthesis. Stabilizes the binding of IF-2 and IF-3 on the 30S subunit to which N-formylmethionyl-tRNA(fMet) subsequently binds. Helps modulate mRNA selection, yielding the 30S pre-initiation complex (PIC). Upon addition of the 50S ribosomal subunit IF-1, IF-2 and IF-3 are released leaving the mature 70S translation initiation complex. The sequence is that of Translation initiation factor IF-1, chloroplastic from Ostreococcus tauri.